A 57-amino-acid polypeptide reads, in one-letter code: Small polypeptide DEVIL 20 (57 aa).

An N-linked (GlcNAc...) asparagine glycan is attached at Asn5. The segment at Thr16–Gly47 is required for DVL/RTFL small polypeptide activity. A helical membrane pass occupies residues Arg29–Gly45.

This sequence belongs to the DVL/RTFL small polypeptides family.

Its subcellular location is the cell membrane. Its function is as follows. Small polypeptide acting as a regulatory molecule which coordinates cellular responses required for differentiation, growth and development, probably by restricting polar cell proliferation in lateral organs and coordinating socket cell recruitment and differentiation at trichome sites. This chain is Small polypeptide DEVIL 20, found in Arabidopsis thaliana (Mouse-ear cress).